Reading from the N-terminus, the 504-residue chain is Crh-like protein CRH12 (504 aa).

An N-terminal signal peptide occupies residues 1 to 18; the sequence is MYKQILTFLILFLRYILS. Residues 19-270 enclose the GH16 domain; it reads EFPDDPYEDD…YSKALTYSYG (252 aa). The N-linked (GlcNAc...) asparagine glycan is linked to Asn-34. A disulfide bond links Cys-43 and Cys-51. Glu-138 (nucleophile) is an active-site residue. Residue Glu-143 is the Proton donor of the active site. Glu-143 contributes to the chitin binding site. Asn-161 carries an N-linked (GlcNAc...) asparagine glycan. Chitin-binding residues include Lys-221, Trp-225, and Thr-234. The disordered stretch occupies residues 304–404; the sequence is KPTPKQETDD…LDISTQLPPL (101 aa). Positions 316–329 are enriched in polar residues; that stretch reads VLTSSKSQRVATTI. Positions 356–378 are enriched in acidic residues; it reads WETEQDETGTDDTENSDNEEEES. N-linked (GlcNAc...) asparagine glycans are attached at residues Asn-407, Asn-416, and Asn-425. The GPI-anchor amidated glycine moiety is linked to residue Gly-479. The propeptide at 480–504 is removed in mature form; sequence VSSILATSFSSVVIAEILVIVVLLL.

The protein belongs to the glycosyl hydrolase 16 family. CRH1 subfamily. In terms of processing, the GPI-anchor is attached to the protein in the endoplasmic reticulum and serves to target the protein to the cell surface. There, the glucosamine-inositol phospholipid moiety is cleaved off and the GPI-modified mannoprotein is covalently attached via its lipidless GPI glycan remnant to the 1,6-beta-glucan of the outer cell wall layer.

The protein resides in the secreted. It is found in the cell wall. Its subcellular location is the membrane. It carries out the reaction Random endo-hydrolysis of N-acetyl-beta-D-glucosaminide (1-&gt;4)-beta-linkages in chitin and chitodextrins.. In terms of biological role, dual chitinase/transglycosylase that plays a role in cell wall architecture. Chitinase and transglycosylase activities are coupled. Required for the polysaccharide cross-linking at the septa and the cell wall. More specifically, transfers chitin to 1,6-beta-glucan in the cell wall. Plays an important role in fungal pathogenesis via its functions in cell wall assembly and regeneration, filamentation, and adherence to host cells. The polypeptide is Crh-like protein CRH12 (CRH12) (Candida albicans (strain SC5314 / ATCC MYA-2876) (Yeast)).